Consider the following 431-residue polypeptide: Protein EARLY STARVATION 1, chloroplastic (431 aa).

The transit peptide at 1-19 (MAACSRGLVARPFDLTARG) directs the protein to the chloroplast. 2 disordered regions span residues 65–126 (GNKP…DTGI) and 403–431 (GVYP…SPLE). Positions 415-431 (PAPPSDDPPGMPPSPLE) are enriched in pro residues.

The protein belongs to the ESV1 family.

It localises to the plastid. The protein localises to the chloroplast stroma. Its function is as follows. Binds preferentially to highly ordered alpha-glucans, such as starch and crystalline maltodextrins. Involved in the organization of the starch granule matrix, thus influencing starch turnover by modulating the accessibility of starch polymers to modifying and degrading enzymes. Required for the control of starch degradation in leaves and starch distribution in nonphotosynthetic parts. Promotes gravitropic responses, negative in shoots but positive in roots, by facilitating starch granules (statoliths) formation in hypocotyls and roots columella. Facilitates tight packing of starch granules in grains. This Oryza sativa subsp. indica (Rice) protein is Protein EARLY STARVATION 1, chloroplastic.